The primary structure comprises 524 residues: Alkaline phosphatase, tissue-nonspecific isozyme (524 aa).

Residues 1 to 17 form the signal peptide; it reads MISPFLVLAIGTCLTNS. Asp60 is a Mg(2+) binding site. 2 residues coordinate Zn(2+): Asp60 and Ser110. Catalysis depends on Ser110, which acts as the Phosphoserine intermediate. A Phosphoserine modification is found at Ser110. A disulfide bond links Cys139 and Cys201. Asn140 is a glycosylation site (N-linked (GlcNAc...) asparagine). Thr173 contributes to the Mg(2+) binding site. A glycan (N-linked (GlcNAc...) asparagine) is linked at Asn230. Residue Glu235 participates in Ca(2+) binding. N-linked (GlcNAc...) asparagine glycosylation is present at Asn271. 2 residues coordinate Ca(2+): Phe290 and Glu291. The N-linked (GlcNAc...) asparagine glycan is linked to Asn303. A Ca(2+)-binding site is contributed by Asp306. Glu332 provides a ligand contact to Mg(2+). Residues Asp337, His341, Asp378, and His379 each contribute to the Zn(2+) site. N-linked (GlcNAc...) asparagine glycosylation occurs at Asn430. Residue His454 coordinates Zn(2+). Cys489 and Cys497 are disulfide-bonded. The GPI-anchor amidated serine moiety is linked to residue Ser501. A propeptide spans 502-524 (removed in mature form); the sequence is SAGSLAAGPLLLALALYPLSVLF.

This sequence belongs to the alkaline phosphatase family. As to quaternary structure, homodimer. Mg(2+) is required as a cofactor. It depends on Zn(2+) as a cofactor. Requires Ca(2+) as cofactor. N-glycosylated.

The protein localises to the cell membrane. Its subcellular location is the extracellular vesicle membrane. It is found in the mitochondrion membrane. The protein resides in the mitochondrion intermembrane space. It carries out the reaction a phosphate monoester + H2O = an alcohol + phosphate. It catalyses the reaction diphosphate + H2O = 2 phosphate + H(+). The enzyme catalyses pyridoxal 5'-phosphate + H2O = pyridoxal + phosphate. The catalysed reaction is phosphoethanolamine + H2O = ethanolamine + phosphate. It carries out the reaction N-phosphocreatine + H2O = creatine + phosphate. It catalyses the reaction ATP + H2O = ADP + phosphate + H(+). The enzyme catalyses ADP + H2O = AMP + phosphate + H(+). The catalysed reaction is AMP + H2O = adenosine + phosphate. With respect to regulation, phosphatase activity is specifically inhibited by 5-((5-chloro-2-methoxyphenyl)sulfonamido)nicotinamide (SBI-425). In terms of biological role, alkaline phosphatase that metabolizes various phosphate compounds and plays a key role in skeletal mineralization and adaptive thermogenesis. Has broad substrate specificity and can hydrolyze a considerable variety of compounds: however, only a few substrates, such as diphosphate (inorganic pyrophosphate; PPi), pyridoxal 5'-phosphate (PLP) and N-phosphocreatine are natural substrates. Plays an essential role in skeletal and dental mineralization via its ability to hydrolyze extracellular diphosphate, a potent mineralization inhibitor, to phosphate: it thereby promotes hydroxyapatite crystal formation and increases inorganic phosphate concentration. Acts in a non-redundant manner with PHOSPHO1 in skeletal mineralization: while PHOSPHO1 mediates the initiation of hydroxyapatite crystallization in the matrix vesicles (MVs), ALPL/TNAP catalyzes the spread of hydroxyapatite crystallization in the extracellular matrix. Also promotes dephosphorylation of osteopontin (SSP1), an inhibitor of hydroxyapatite crystallization in its phosphorylated state; it is however unclear whether ALPL/TNAP mediates SSP1 dephosphorylation via a direct or indirect manner. Catalyzes dephosphorylation of PLP to pyridoxal (PL), the transportable form of vitamin B6, in order to provide a sufficient amount of PLP in the brain, an essential cofactor for enzymes catalyzing the synthesis of diverse neurotransmitters. Additionally, also able to mediate ATP degradation in a stepwise manner to adenosine, thereby regulating the availability of ligands for purinergic receptors. Also capable of dephosphorylating microbial products, such as lipopolysaccharides (LPS) as well as other phosphorylated small-molecules, such as poly-inosine:cytosine (poly I:C). Acts as a key regulator of adaptive thermogenesis as part of the futile creatine cycle: localizes to the mitochondria of thermogenic fat cells and acts by mediating hydrolysis of N-phosphocreatine to initiate a futile cycle of creatine dephosphorylation and phosphorylation. During the futile creatine cycle, creatine and N-phosphocreatine are in a futile cycle, which dissipates the high energy charge of N-phosphocreatine as heat without performing any mechanical or chemical work. This chain is Alkaline phosphatase, tissue-nonspecific isozyme, found in Homo sapiens (Human).